Here is a 291-residue protein sequence, read N- to C-terminus: ATP synthase subunit b 2 (291 aa).

The chain crosses the membrane as a helical span at residues 2–22 (LIDGFTVVAQIVNFLILVWLL).

This sequence belongs to the ATPase B chain family. F-type ATPases have 2 components, F(1) - the catalytic core - and F(0) - the membrane proton channel. F(1) has five subunits: alpha(3), beta(3), gamma(1), delta(1), epsilon(1). F(0) has three main subunits: a(1), b(2) and c(10-14). The alpha and beta chains form an alternating ring which encloses part of the gamma chain. F(1) is attached to F(0) by a central stalk formed by the gamma and epsilon chains, while a peripheral stalk is formed by the delta and b chains.

It is found in the cell inner membrane. Its function is as follows. F(1)F(0) ATP synthase produces ATP from ADP in the presence of a proton or sodium gradient. F-type ATPases consist of two structural domains, F(1) containing the extramembraneous catalytic core and F(0) containing the membrane proton channel, linked together by a central stalk and a peripheral stalk. During catalysis, ATP synthesis in the catalytic domain of F(1) is coupled via a rotary mechanism of the central stalk subunits to proton translocation. Functionally, component of the F(0) channel, it forms part of the peripheral stalk, linking F(1) to F(0). The protein is ATP synthase subunit b 2 of Nitrosospira multiformis (strain ATCC 25196 / NCIMB 11849 / C 71).